Consider the following 198-residue polypeptide: NADH-quinone oxidoreductase subunit B 1 (198 aa).

[4Fe-4S] cluster is bound by residues Cys77, Cys78, Cys142, and Cys172.

Belongs to the complex I 20 kDa subunit family. In terms of assembly, NDH-1 is composed of 14 different subunits. Subunits NuoB, C, D, E, F, and G constitute the peripheral sector of the complex. Requires [4Fe-4S] cluster as cofactor.

Its subcellular location is the cell inner membrane. It carries out the reaction a quinone + NADH + 5 H(+)(in) = a quinol + NAD(+) + 4 H(+)(out). Its function is as follows. NDH-1 shuttles electrons from NADH, via FMN and iron-sulfur (Fe-S) centers, to quinones in the respiratory chain. The immediate electron acceptor for the enzyme in this species is believed to be ubiquinone. Couples the redox reaction to proton translocation (for every two electrons transferred, four hydrogen ions are translocated across the cytoplasmic membrane), and thus conserves the redox energy in a proton gradient. This chain is NADH-quinone oxidoreductase subunit B 1, found in Rhodopseudomonas palustris (strain ATCC BAA-98 / CGA009).